A 132-amino-acid polypeptide reads, in one-letter code: Putative RNase AF_0947 (132 aa).

Residues arginine 91 and histidine 96 contribute to the active site. An RX(4)HXY motif motif is present at residues 91 to 98 (RNAIAHHY). Tyrosine 98 carries the post-translational modification O-di-AMP-tyrosine.

This sequence belongs to the HepT RNase toxin family. In terms of assembly, homodimer, probably forms a complex with cognate antitoxin AF_0948. Modified by cognate antitoxin AF_0948; probably at least 2 successive AMPylation events occur on Tyr-98.

Probable toxic component of a putative type VII toxin-antitoxin (TA) system, probably an RNase. Probably neutralized by cognate antitoxin AF_0948. Neutralization may be due to AMPylation by AF_0948. In Archaeoglobus fulgidus (strain ATCC 49558 / DSM 4304 / JCM 9628 / NBRC 100126 / VC-16), this protein is Putative RNase AF_0947.